A 554-amino-acid polypeptide reads, in one-letter code: Hydroxylamine reductase (554 aa).

Cys-3, Cys-6, Cys-18, and Cys-25 together coordinate [2Fe-2S] cluster. Hybrid [4Fe-2O-2S] cluster is bound by residues His-252, Glu-276, Cys-320, Cys-408, Cys-436, Cys-461, Glu-495, and Lys-497. The residue at position 408 (Cys-408) is a Cysteine persulfide.

The protein belongs to the HCP family. The cofactor is [2Fe-2S] cluster. Requires hybrid [4Fe-2O-2S] cluster as cofactor.

The protein resides in the cytoplasm. The enzyme catalyses A + NH4(+) + H2O = hydroxylamine + AH2 + H(+). In terms of biological role, catalyzes the reduction of hydroxylamine to form NH(3) and H(2)O. This Shewanella sp. (strain MR-4) protein is Hydroxylamine reductase.